We begin with the raw amino-acid sequence, 657 residues long: Glycogen debranching enzyme (657 aa).

The Nucleophile role is filled by Asp-336. Catalysis depends on Glu-371, which acts as the Proton donor. Residues 460-479 (ANGEENRDGTNNNHSFNHGI) form a disordered region.

This sequence belongs to the glycosyl hydrolase 13 family.

The enzyme catalyses Hydrolysis of (1-&gt;6)-alpha-D-glucosidic linkages to branches with degrees of polymerization of three or four glucose residues in limit dextrin.. The protein operates within glycan degradation; glycogen degradation. Removes maltotriose and maltotetraose chains that are attached by 1,6-alpha-linkage to the limit dextrin main chain, generating a debranched limit dextrin. The polypeptide is Glycogen debranching enzyme (Enterobacter sp. (strain 638)).